Reading from the N-terminus, the 331-residue chain is Cysteine and histidine-rich domain-containing protein 1 (331 aa).

Zn(2+) contacts are provided by Cys-5, Cys-10, Cys-24, His-27, Cys-42, Cys-43, Cys-59, His-64, Cys-157, Cys-162, Cys-176, His-179, Cys-194, Cys-195, Cys-211, and His-216. 2 consecutive CHORD domains span residues 5–64 and 157–216; these read CYNR…KGLH and CKNA…TGTH. The region spanning 227–316 is the CS domain; that stretch reads VVPCRHDWHQ…AEPLLWASLE (90 aa).

Functionally, regulates centrosome duplication. This Gallus gallus (Chicken) protein is Cysteine and histidine-rich domain-containing protein 1 (CHORDC1).